A 447-amino-acid polypeptide reads, in one-letter code: ATP-dependent protease ATPase subunit HslU (447 aa).

ATP is bound by residues isoleucine 18, 60–65 (GVGKTE), aspartate 259, glutamate 325, and arginine 397.

This sequence belongs to the ClpX chaperone family. HslU subfamily. In terms of assembly, a double ring-shaped homohexamer of HslV is capped on each side by a ring-shaped HslU homohexamer. The assembly of the HslU/HslV complex is dependent on binding of ATP.

The protein resides in the cytoplasm. Functionally, ATPase subunit of a proteasome-like degradation complex; this subunit has chaperone activity. The binding of ATP and its subsequent hydrolysis by HslU are essential for unfolding of protein substrates subsequently hydrolyzed by HslV. HslU recognizes the N-terminal part of its protein substrates and unfolds these before they are guided to HslV for hydrolysis. This Burkholderia lata (strain ATCC 17760 / DSM 23089 / LMG 22485 / NCIMB 9086 / R18194 / 383) protein is ATP-dependent protease ATPase subunit HslU.